The chain runs to 190 residues: Peptidyl-tRNA hydrolase (190 aa).

A tRNA-binding site is contributed by Phe14. The active-site Proton acceptor is His19. The tRNA site is built by Met64, Asn66, and Asn112.

It belongs to the PTH family. As to quaternary structure, monomer.

It localises to the cytoplasm. The catalysed reaction is an N-acyl-L-alpha-aminoacyl-tRNA + H2O = an N-acyl-L-amino acid + a tRNA + H(+). Its function is as follows. Hydrolyzes ribosome-free peptidyl-tRNAs (with 1 or more amino acids incorporated), which drop off the ribosome during protein synthesis, or as a result of ribosome stalling. In terms of biological role, catalyzes the release of premature peptidyl moieties from peptidyl-tRNA molecules trapped in stalled 50S ribosomal subunits, and thus maintains levels of free tRNAs and 50S ribosomes. This Staphylococcus epidermidis (strain ATCC 35984 / DSM 28319 / BCRC 17069 / CCUG 31568 / BM 3577 / RP62A) protein is Peptidyl-tRNA hydrolase.